The chain runs to 364 residues: Histidinol-phosphate aminotransferase (364 aa).

Lys222 carries the N6-(pyridoxal phosphate)lysine modification.

This sequence belongs to the class-II pyridoxal-phosphate-dependent aminotransferase family. Histidinol-phosphate aminotransferase subfamily. Homodimer. Pyridoxal 5'-phosphate is required as a cofactor.

It carries out the reaction L-histidinol phosphate + 2-oxoglutarate = 3-(imidazol-4-yl)-2-oxopropyl phosphate + L-glutamate. It functions in the pathway amino-acid biosynthesis; L-histidine biosynthesis; L-histidine from 5-phospho-alpha-D-ribose 1-diphosphate: step 7/9. The polypeptide is Histidinol-phosphate aminotransferase (Brevibacillus brevis (strain 47 / JCM 6285 / NBRC 100599)).